The chain runs to 565 residues: Urocanate hydratase (565 aa).

Residues 58 to 59 (GG), Gln-136, 182 to 184 (GMG), Glu-202, Arg-207, 245 to 246 (NA), 266 to 270 (QTSAH), 276 to 277 (YL), and Tyr-325 each bind NAD(+). Cys-413 is an active-site residue. NAD(+) is bound at residue Gly-495.

The protein belongs to the urocanase family. NAD(+) is required as a cofactor.

Its subcellular location is the cytoplasm. The catalysed reaction is 4-imidazolone-5-propanoate = trans-urocanate + H2O. Its pathway is amino-acid degradation; L-histidine degradation into L-glutamate; N-formimidoyl-L-glutamate from L-histidine: step 2/3. In terms of biological role, catalyzes the conversion of urocanate to 4-imidazolone-5-propionate. This is Urocanate hydratase from Vibrio vulnificus (strain CMCP6).